The chain runs to 130 residues: Small ribosomal subunit protein uS11 (130 aa).

It belongs to the universal ribosomal protein uS11 family. In terms of assembly, part of the 30S ribosomal subunit. Interacts with proteins S7 and S18. Binds to IF-3.

Functionally, located on the platform of the 30S subunit, it bridges several disparate RNA helices of the 16S rRNA. Forms part of the Shine-Dalgarno cleft in the 70S ribosome. This chain is Small ribosomal subunit protein uS11, found in Gluconobacter oxydans (strain 621H) (Gluconobacter suboxydans).